Consider the following 170-residue polypeptide: Lipoprotein signal peptidase (170 aa).

The next 2 membrane-spanning stretches (helical) occupy residues Tyr71–Asn91 and Ala97–Phe116. Active-site residues include Asp122 and Asp140. The chain crosses the membrane as a helical span at residues Trp131–Val151.

Belongs to the peptidase A8 family.

Its subcellular location is the cell inner membrane. It carries out the reaction Release of signal peptides from bacterial membrane prolipoproteins. Hydrolyzes -Xaa-Yaa-Zaa-|-(S,diacylglyceryl)Cys-, in which Xaa is hydrophobic (preferably Leu), and Yaa (Ala or Ser) and Zaa (Gly or Ala) have small, neutral side chains.. It participates in protein modification; lipoprotein biosynthesis (signal peptide cleavage). In terms of biological role, this protein specifically catalyzes the removal of signal peptides from prolipoproteins. The polypeptide is Lipoprotein signal peptidase (Serratia marcescens).